Here is a 365-residue protein sequence, read N- to C-terminus: MASSSNIKHRLWLDGCMDFFHYGHSNAILQAKQLGETLVIGIHSDEEITLNKGPPVMTLEERCLSANTCKWVDEVVPSAPYVFDLEWMRRYGCQYVVHGDDISTDANGDDCYRFAKAADQYLEVKRTEGVSTTELLDRLLSSVPLEIYSTPVSVLSSQIDLLRRFATDSDGLTPFTDVFIYNTEKPETLISGTTLLRLNPEKNIIYIDGDWDLFTEKHISALELCTRMFPGIPIMAGIFADEKCFEKPMLNLLERILNLLQCKYISSILVGPPPASLFASSKYIKLCFDEQISKVYYPIFSTDVSIPALDISLSNTPNNSFYKFDKLGSDLIKQRVMLRRQHYEERQRRKMGKNATEQTTIKTYA.

The disordered stretch occupies residues 344–365 (EERQRRKMGKNATEQTTIKTYA). Over residues 355–365 (ATEQTTIKTYA) the composition is skewed to polar residues.

The protein belongs to the cytidylyltransferase family.

The catalysed reaction is phosphoethanolamine + CTP + H(+) = CDP-ethanolamine + diphosphate. It functions in the pathway phospholipid metabolism; phosphatidylethanolamine biosynthesis; phosphatidylethanolamine from ethanolamine: step 2/3. The chain is Probable ethanolamine-phosphate cytidylyltransferase from Schizosaccharomyces pombe (strain 972 / ATCC 24843) (Fission yeast).